The chain runs to 294 residues: Metallophosphoesterase MPPED2 (294 aa).

Mn(2+)-binding residues include Asp-65, His-67, Asp-86, Asn-117, and His-213. Residue 117–118 coordinates GMP; that stretch reads NH. GMP contacts are provided by residues 225–226 and 252–255; these read KE and GIHE. Mn(2+) is bound at residue His-254.

Belongs to the UPF0046 family. Homodimer. The cofactor is Mn(2+). Co(2+) is required as a cofactor.

Its activity is regulated as follows. Inhibited by nmolar levels of AMP and GMP. In terms of biological role, displays low metallophosphoesterase activity (in vitro). May play a role in the development of the nervous system. This Mus musculus (Mouse) protein is Metallophosphoesterase MPPED2 (Mpped2).